The following is a 651-amino-acid chain: Protein transport protein SEC9 (651 aa).

Disordered regions lie at residues 1–22, 53–299, and 313–332; these read MGLK…QNKD, AEDK…QAPM, and RNSE…DFEE. A phosphoserine mark is found at S79 and S92. The span at 86 to 112 shows a compositional bias: polar residues; the sequence is NEATAGSNRGSSGTQDLGNGAESNSMQ. Basic and acidic residues predominate over residues 120–129; that stretch reads DDYRYDDDPY. 2 stretches are compositionally biased toward polar residues: residues 157-218 and 244-284; these read GTSL…SLDQ and DSNT…ANPY. Residues S186, S190, S213, S271, and S273 each carry the phosphoserine modification. Residues 285 to 296 are compositionally biased toward low complexity; sequence SSRSVRQPQSQQ. A compositionally biased stretch (basic and acidic residues) spans 313–327; it reads RNSEVDLNEEPRTGE. At S315 the chain carries Phosphoserine. At T355 the chain carries Phosphothreonine. Residue S359 is modified to Phosphoserine. T-SNARE coiled-coil homology domains follow at residues 434–496 and 588–650; these read KFTK…VAEL and DEME…LAGI.

The protein belongs to the SNAP-25 family. In terms of assembly, interacts with SRO7 and SRO77.

Component of a SNARE complex that may be the effector of SEC4 function in exocytosis. The sequence is that of Protein transport protein SEC9 (SEC9) from Saccharomyces cerevisiae (strain ATCC 204508 / S288c) (Baker's yeast).